A 445-amino-acid polypeptide reads, in one-letter code: Alpha-1,3-mannosyl-glycoprotein 2-beta-N-acetylglucosaminyltransferase (445 aa).

Over 1–6 (MLKKQS) the chain is Cytoplasmic. The chain crosses the membrane as a helical; Signal-anchor for type II membrane protein span at residues 7 to 29 (AGLVLWGAILFVAWNALLLLFFW). Residues 30 to 445 (TRPAPGRPPS…TWEGYDPSWN (416 aa)) are Lumenal-facing. A disulfide bridge links Cys113 with Cys143. 4 residues coordinate substrate: Arg115, Asp142, His188, and Asp210. Asp211 lines the Mn(2+) pocket. Cysteines 237 and 303 form a disulfide. Asp289 (proton acceptor) is an active-site residue. Ser320 is a binding site for substrate.

This sequence belongs to the glycosyltransferase 13 family. In terms of assembly, interacts with MGAT4D. Interacts with BRI3 (isoforms 1 and 2); the interaction with isoform 2 is weaker than with isoform 1. It depends on Mn(2+) as a cofactor.

The protein localises to the golgi apparatus membrane. Its subcellular location is the cytoplasm. It localises to the perinuclear region. The catalysed reaction is N(4)-(alpha-D-Man-(1-&gt;3)-[alpha-D-Man-(1-&gt;3)-[alpha-D-Man-(1-&gt;6)]-alpha-D-Man-(1-&gt;6)]-beta-D-Man-(1-&gt;4)-beta-D-GlcNAc-(1-&gt;4)-beta-D-GlcNAc)-L-asparaginyl-[protein] (N-glucan mannose isomer 5A1,2) + UDP-N-acetyl-alpha-D-glucosamine = N(4)-{beta-D-GlcNAc-(1-&gt;2)-alpha-D-Man-(1-&gt;3)-[alpha-D-Man-(1-&gt;3)-[alpha-D-Man-(1-&gt;6)]-alpha-D-Man-(1-&gt;6)]-beta-D-Man-(1-&gt;4)-beta-D-GlcNAc-(1-&gt;4)-beta-D-GlcNAc}-L-asparaginyl-[protein] + UDP + H(+). The protein operates within protein modification; protein glycosylation. In terms of biological role, initiates complex N-linked carbohydrate formation. Essential for the conversion of high-mannose to hybrid and complex N-glycans. The polypeptide is Alpha-1,3-mannosyl-glycoprotein 2-beta-N-acetylglucosaminyltransferase (MGAT1) (Homo sapiens (Human)).